The primary structure comprises 587 residues: GTPase-activating protein skywalker (587 aa).

A 1,2-diacyl-sn-glycero-3-phospho-(1D-myo-inositol) is bound by residues Lys-75 and Arg-79. Residues 84-275 (PINSPIRAQL…RIMDCYFHEG (192 aa)) form the Rab-GAP TBC domain. Residues Lys-277, Arg-281, and 335-339 (RGLST) each bind a 1,2-diacyl-sn-glycero-3-phospho-(1D-myo-inositol). Positions 408 to 585 (TWTDRQFLFT…IRVLEVYGFV (178 aa)) constitute a TLDc domain.

Detected in the larval ventral nerve cord and neuromuscular junction boutons (at protein level).

It localises to the cytoplasmic vesicle. Its subcellular location is the secretory vesicle. The protein localises to the synaptic vesicle membrane. The protein resides in the endosome membrane. GTPase-activating protein (GAP) for Rab35 which regulates synaptic vesicle (SV) protein recycling and turnover at the neuromuscular junction boutons and possibly ventral nerve cord via endosomal trafficking. Inhibits Rab35-mediated endosomal sorting which traffics old or dysfunctional SV proteins through a degradative endolysosomal route that involves the ESCRT pathway and the HOPS complex members dor, vps39 and rab7. This function is essential for preventing excessive degradation and turnover of vesicles from the readily releasable pool which leads to increased neurotransmission and eventually neurodegeneration. Preferentially binds phosphoinositides phosphorylated at the D5 position of the inositol ring, such as phosphatidylinositol 4,5-bisphosphate (PIP2) and phosphatidylinositol 3,4,5-trisphosphate (PIP3). Binding to phosphoinositides and thus membrane-association, is required for its function in regulating the turnover of synaptic-vesicle proteins. It is therefore likely that it is recruited to vesicle membranes with high phosphoinositide content and thereby selectively prevents endolysosomal degradation of these vesicles. The chain is GTPase-activating protein skywalker from Drosophila melanogaster (Fruit fly).